Reading from the N-terminus, the 697-residue chain is CENP-A multicopy suppressor protein 2 (697 aa).

A GATA-type; atypical zinc finger spans residues 351 to 378; that stretch reads CQNCGTIKTANWRNATYMNITLMLCNAC. Residues 443–484 are disordered; it reads PLNRLTSLDSTHSAPDPNHISKPSVVNQQKSRGGPRTAKLKN. Residues 445–455 are compositionally biased toward polar residues; sequence NRLTSLDSTHS.

As to quaternary structure, interacts with CENP-A.

It localises to the nucleus. Its subcellular location is the chromosome. The protein resides in the centromere. In terms of biological role, required for proper chromosome segregation via regulation of CENP-A localization to the centromere. The protein is CENP-A multicopy suppressor protein 2 (ams2) of Schizosaccharomyces pombe (strain 972 / ATCC 24843) (Fission yeast).